The following is an 813-amino-acid chain: Protein mac-1 (813 aa).

2 coiled-coil regions span residues 58–89 (VREA…VQEI) and 122–152 (SDDS…TVLN). Disordered stretches follow at residues 97-131 (TRKR…ERAA) and 152-193 (NLYT…GAVS). Residues 158 to 172 (SAPSTPVSTPKNQAT) are compositionally biased toward polar residues. The segment covering 175–191 (PPGASAAPPALPRGLGA) has biased composition (low complexity). Residues 246 to 253 (GPPGCGKT) and 575 to 582 (GPPGCGKT) contribute to the ATP site.

This sequence belongs to the AAA ATPase family. Found in a complex composed of ced-3, ced-4 and mac-1 or of ced-9, ced-4 and mac-1. Within the complex, interacts with ced-4.

Its function is as follows. Probably together with ced-9, plays a modest role in preventing ced-4 and caspase ced-3-mediated apoptosis. The protein is Protein mac-1 of Caenorhabditis elegans.